The primary structure comprises 193 residues: Ion-translocating oxidoreductase complex subunit A (193 aa).

6 helical membrane passes run 5-25 (LLLL…FLGL), 39-59 (VGMG…AYLV), 72-92 (LSTL…EMVI), 102-122 (ILGI…LALL), 134-154 (VVYG…FASL), and 170-190 (IAIG…FTGL).

Belongs to the NqrDE/RnfAE family. In terms of assembly, the complex is composed of six subunits: RnfA, RnfB, RnfC, RnfD, RnfE and RnfG.

The protein localises to the cell inner membrane. In terms of biological role, part of a membrane-bound complex that couples electron transfer with translocation of ions across the membrane. The sequence is that of Ion-translocating oxidoreductase complex subunit A from Tolumonas auensis (strain DSM 9187 / NBRC 110442 / TA 4).